The primary structure comprises 133 residues: Ribonuclease P protein component (133 aa).

It belongs to the RnpA family. As to quaternary structure, consists of a catalytic RNA component (M1 or rnpB) and a protein subunit.

It catalyses the reaction Endonucleolytic cleavage of RNA, removing 5'-extranucleotides from tRNA precursor.. Its function is as follows. RNaseP catalyzes the removal of the 5'-leader sequence from pre-tRNA to produce the mature 5'-terminus. It can also cleave other RNA substrates such as 4.5S RNA. The protein component plays an auxiliary but essential role in vivo by binding to the 5'-leader sequence and broadening the substrate specificity of the ribozyme. This Corynebacterium glutamicum (strain ATCC 13032 / DSM 20300 / JCM 1318 / BCRC 11384 / CCUG 27702 / LMG 3730 / NBRC 12168 / NCIMB 10025 / NRRL B-2784 / 534) protein is Ribonuclease P protein component.